We begin with the raw amino-acid sequence, 248 residues long: Probable transcriptional regulatory protein RPC_4807 (248 aa).

The disordered stretch occupies residues 1-21 (MAGHSQFKNIMHRKGRQDAQK).

The protein belongs to the TACO1 family.

It localises to the cytoplasm. The protein is Probable transcriptional regulatory protein RPC_4807 of Rhodopseudomonas palustris (strain BisB18).